The following is a 379-amino-acid chain: MKQISLLGSTGSIGTQTLDVIRDYPDQFTLSALACGTNLELCRNQIKEFQPKLVSVQRPEDAQTLAGEFGDSIEFLYGEEGLKEVARYSESDIVVTAITGSIGLLPTLSAIKAKKAVAIANKETLVSAGHLVVSAAKENDVPLIPVDSEHSAIFQALNGEPKKAVDRLILTASGGSFRDKSRAELDGVTVEQALAHPNWSMGAKVTIDSATMMNKGLEVIEAKWLFGLDYDQIDVLIHKESIIHSMVEYVDRSVIAQLGTPDMRVPIQYALTYPERFARPKHERLDLAELGKLHFEKMDMERFRCMKLAYEAGRAGGTMTTVLNAANEVAVCRFLQGEITFLEIERIIEEALSAHSPIAHPSLEEIQAVDASIRKQLQA.

NADPH-binding residues include Thr10, Gly11, Ser12, Ile13, Gly36, Asn38, and Asn121. Lys122 serves as a coordination point for 1-deoxy-D-xylulose 5-phosphate. Glu123 contacts NADPH. Asp147 serves as a coordination point for Mn(2+). 1-deoxy-D-xylulose 5-phosphate-binding residues include Ser148, Glu149, Ser173, and His196. Glu149 lines the Mn(2+) pocket. Gly202 is an NADPH binding site. Residues Ser209, Asn214, Lys215, and Glu218 each coordinate 1-deoxy-D-xylulose 5-phosphate. Glu218 serves as a coordination point for Mn(2+).

It belongs to the DXR family. The cofactor is Mg(2+). Requires Mn(2+) as cofactor.

It catalyses the reaction 2-C-methyl-D-erythritol 4-phosphate + NADP(+) = 1-deoxy-D-xylulose 5-phosphate + NADPH + H(+). It functions in the pathway isoprenoid biosynthesis; isopentenyl diphosphate biosynthesis via DXP pathway; isopentenyl diphosphate from 1-deoxy-D-xylulose 5-phosphate: step 1/6. Catalyzes the NADPH-dependent rearrangement and reduction of 1-deoxy-D-xylulose-5-phosphate (DXP) to 2-C-methyl-D-erythritol 4-phosphate (MEP). This Shouchella clausii (strain KSM-K16) (Alkalihalobacillus clausii) protein is 1-deoxy-D-xylulose 5-phosphate reductoisomerase.